The primary structure comprises 488 residues: Pup--protein ligase (488 aa).

E33 is a binding site for Mg(2+). Residue R76 coordinates ATP. Mg(2+) is bound at residue Y78. The active-site Proton acceptor is the D80. Residue E86 coordinates Mg(2+). Positions 89 and 453 each coordinate ATP.

Belongs to the Pup ligase/Pup deamidase family. Pup-conjugating enzyme subfamily.

The enzyme catalyses ATP + [prokaryotic ubiquitin-like protein]-L-glutamate + [protein]-L-lysine = ADP + phosphate + N(6)-([prokaryotic ubiquitin-like protein]-gamma-L-glutamyl)-[protein]-L-lysine.. It participates in protein degradation; proteasomal Pup-dependent pathway. The protein operates within protein modification; protein pupylation. Its function is as follows. Catalyzes the covalent attachment of the prokaryotic ubiquitin-like protein modifier Pup to the proteasomal substrate proteins, thereby targeting them for proteasomal degradation. This tagging system is termed pupylation. The ligation reaction involves the side-chain carboxylate of the C-terminal glutamate of Pup and the side-chain amino group of a substrate lysine. This Bifidobacterium adolescentis (strain ATCC 15703 / DSM 20083 / NCTC 11814 / E194a) protein is Pup--protein ligase.